Consider the following 196-residue polypeptide: SAGA-associated factor 11 homolog (196 aa).

The segment at 102 to 123 (CTCPNCDRLVAAARFAPHLEKC) adopts an SGF11-type zinc-finger fold. The segment at 140-196 (TKEGTSASSNSSYVHSGANAGGTDDEDDVDWSSDKRKKKSTQNSRNNGSKKNNGKTF) is disordered. Polar residues predominate over residues 142 to 153 (EGTSASSNSSYV). Serine 172 bears the Phosphoserine mark. Positions 182 to 196 (NSRNNGSKKNNGKTF) are enriched in low complexity.

This sequence belongs to the SGF11 family. As to quaternary structure, component of some SAGA transcription coactivator-HAT complexes, at least composed of Ada2b, not/nonstop, Pcaf/Gcn5, Sgf11 and Spt3. Within the SAGA complex, Sgf11, e(y)2, and not/nonstop form an additional subcomplex of SAGA called the DUB module (deubiquitination module). Interacts directly with not/nonstop. Interacts with the AMEX complex component xmas-2. Interacts with Cbp80; important for promoter recruitment of Sgf11 that is not associated with the DUB module.

The protein localises to the nucleus. Its subcellular location is the nucleoplasm. It is found in the cytoplasm. Its function is as follows. Component of the transcription regulatory histone acetylation (HAT) complex SAGA, a multiprotein complex that activates transcription by remodeling chromatin and mediating histone acetylation and deubiquitination. Within the SAGA complex, participates in a subcomplex that specifically deubiquitinates histone H2B. The SAGA complex is recruited to specific gene promoters by activators, where it is required for transcription. Required for nuclear receptor-mediated transactivation. Binds independently on SAGA to promoters in an RNA-dependent manner. Binds to mRNA and is essential for total mRNA export from the nucleus. Required to counteract heterochromatin silencing. Controls the development of neuronal connectivity in visual system by being required for accurate axon targeting in the optic lobe. Required for expression of ecdysone-induced genes such as br/broad. In Drosophila persimilis (Fruit fly), this protein is SAGA-associated factor 11 homolog.